We begin with the raw amino-acid sequence, 451 residues long: uncharacterized protein (451 aa).

The disordered stretch occupies residues 1–451; the sequence is MSETENKTTT…KKEAAKNKSK (451 aa). Residues 9-22 are compositionally biased toward low complexity; sequence TTETPTTTDSTVTT. Positions 44–54 are enriched in polar residues; the sequence is VKNQLSNTRTR. Residues 73–99 show a composition bias toward basic and acidic residues; the sequence is KLIDTKERKEKKEKKEKEPKEPKEPKE. Residues 114 to 147 show a composition bias toward acidic residues; sequence GDEEEDEEKEEDEEQKEEQSQEEDSEESEEEQNS. Residues 152-162 show a composition bias toward basic residues; the sequence is KKKKKQAKKVA. 3 stretches are compositionally biased toward basic and acidic residues: residues 163-192, 199-210, and 217-230; these read KKETEPKKKEAKPKKEAKPKKETTKKEKEA, STEKKEKEEKPK, and KKDQAAAEKKKDGD. Residues 232–244 are compositionally biased toward low complexity; sequence STTTTATATTTTD. Basic and acidic residues-rich tracts occupy residues 284–303 and 311–340; these read TEEKKDEEKSEEKEKKETKK and AAAEKKKTAANPTDKKDGENKDVTPSDDKP. Low complexity predominate over residues 341–355; that stretch reads AATTTTTTAAAATTT. Residues 356–383 are compositionally biased toward basic and acidic residues; it reads EEPKEKITKPAADKKKAPANKKAEKDQS. A compositionally biased stretch (low complexity) spans 393–425; sequence TTTATTTTTNKDATAPTTTTNKDATAPTTTTTK. Residues 441 to 451 show a composition bias toward basic and acidic residues; sequence PKKEAAKNKSK.

This is an uncharacterized protein from Dictyostelium discoideum (Social amoeba).